The chain runs to 104 residues: uncharacterized protein (104 aa).

This is an uncharacterized protein from Mycobacterium tuberculosis (strain CDC 1551 / Oshkosh).